Here is a 229-residue protein sequence, read N- to C-terminus: uncharacterized protein (229 aa).

It to T.pallidum TP_0315, TP_0618 and TP_0619.

This is an uncharacterized protein from Treponema pallidum (strain Nichols).